We begin with the raw amino-acid sequence, 383 residues long: S-adenosylmethionine synthase (383 aa).

His15 is an ATP binding site. Position 17 (Asp17) interacts with Mg(2+). Glu43 serves as a coordination point for K(+). The L-methionine site is built by Glu56 and Gln99. Positions Gln99 to Arg109 are flexible loop. ATP contacts are provided by residues Asp164–Lys166, Arg230–Phe231, Asp239, Arg245–Lys246, Ala262, and Lys266. Asp239 is a binding site for L-methionine. L-methionine is bound at residue Lys270.

This sequence belongs to the AdoMet synthase family. In terms of assembly, homotetramer; dimer of dimers. Requires Mg(2+) as cofactor. K(+) is required as a cofactor.

It localises to the cytoplasm. The enzyme catalyses L-methionine + ATP + H2O = S-adenosyl-L-methionine + phosphate + diphosphate. The protein operates within amino-acid biosynthesis; S-adenosyl-L-methionine biosynthesis; S-adenosyl-L-methionine from L-methionine: step 1/1. Its function is as follows. Catalyzes the formation of S-adenosylmethionine (AdoMet) from methionine and ATP. The overall synthetic reaction is composed of two sequential steps, AdoMet formation and the subsequent tripolyphosphate hydrolysis which occurs prior to release of AdoMet from the enzyme. The chain is S-adenosylmethionine synthase from Shewanella denitrificans (strain OS217 / ATCC BAA-1090 / DSM 15013).